A 416-amino-acid polypeptide reads, in one-letter code: D-amino acid dehydrogenase (416 aa).

An FAD-binding site is contributed by 3–17; the sequence is ITILGSGVIGVTTAY.

The protein belongs to the DadA oxidoreductase family. FAD serves as cofactor.

It catalyses the reaction a D-alpha-amino acid + A + H2O = a 2-oxocarboxylate + AH2 + NH4(+). Oxidative deamination of D-amino acids. The polypeptide is D-amino acid dehydrogenase (Brucella suis biovar 1 (strain 1330)).